The following is a 95-amino-acid chain: Aspartyl/glutamyl-tRNA(Asn/Gln) amidotransferase subunit C (95 aa).

It belongs to the GatC family. As to quaternary structure, heterotrimer of A, B and C subunits.

It carries out the reaction L-glutamyl-tRNA(Gln) + L-glutamine + ATP + H2O = L-glutaminyl-tRNA(Gln) + L-glutamate + ADP + phosphate + H(+). The enzyme catalyses L-aspartyl-tRNA(Asn) + L-glutamine + ATP + H2O = L-asparaginyl-tRNA(Asn) + L-glutamate + ADP + phosphate + 2 H(+). Functionally, allows the formation of correctly charged Asn-tRNA(Asn) or Gln-tRNA(Gln) through the transamidation of misacylated Asp-tRNA(Asn) or Glu-tRNA(Gln) in organisms which lack either or both of asparaginyl-tRNA or glutaminyl-tRNA synthetases. The reaction takes place in the presence of glutamine and ATP through an activated phospho-Asp-tRNA(Asn) or phospho-Glu-tRNA(Gln). This chain is Aspartyl/glutamyl-tRNA(Asn/Gln) amidotransferase subunit C, found in Caulobacter sp. (strain K31).